Reading from the N-terminus, the 160-residue chain is Protein BOLA1, chloroplastic (160 aa).

A chloroplast-targeting transit peptide spans 1–50 (MFSSSIRLIVSGFHRTQPLKSPVNSPSVFISVPKFFNSESKSTGTGSRSV). The segment covering 39–61 (ESKSTGTGSRSVAMSSVEKTGSD) has biased composition (polar residues). The interval 39–66 (ESKSTGTGSRSVAMSSVEKTGSDSGAIE) is disordered.

The protein belongs to the bolA/yrbA family. As to quaternary structure, interacts in vitro with GRXS14, GRXS15, GRXS16 and GRXS17, but not with GRXC5. Interacts in vivo only with GRXS14 and GRXS16.

The protein localises to the plastid. Its subcellular location is the chloroplast. Functionally, may act either alone or in interaction with glutaredoxin as a redox-regulated transcriptional regulator, or as a factor regulating Fe-S cluster biogenesis. The glutaredoxin-BOLA1 heterodimers bind a labile, oxygen sensitive iron-sulfur cluster. In Arabidopsis thaliana (Mouse-ear cress), this protein is Protein BOLA1, chloroplastic.